Consider the following 467-residue polypeptide: Transcription factor CRF1 (467 aa).

Polar residues predominate over residues 1-10; it reads MLLSAPVNST. Disordered stretches follow at residues 1–42, 62–110, 151–170, and 341–361; these read MLLS…VVLS, DFES…SSKT, SKSE…TNED, and TYRD…DRKR. A compositionally biased stretch (basic residues) spans 11–23; sequence VRRKPHSPNKKKP. Positions 28–42 are enriched in low complexity; it reads TAASFSSSSSTVVLS. Basic and acidic residues predominate over residues 89–102; sequence YSREENTNEVEEKT.

Interacts with FHL1 to form a repressor complex. The formation of the CRF1-FHL1 complex is inhibited by the TOR pathway. In terms of processing, phosphorylated by CDC28 and YAK1.

Its subcellular location is the cytoplasm. It is found in the nucleus. Its function is as follows. Transcription factor, corepressor with FHL1 of ribosomal protein genes. May be involved in the blocking of the spread of silencing. The protein is Transcription factor CRF1 (CRF1) of Saccharomyces cerevisiae (strain ATCC 204508 / S288c) (Baker's yeast).